We begin with the raw amino-acid sequence, 95 residues long: Defensin-like protein 232 (95 aa).

A signal peptide spans 1–26 (MRCTTLIMVSFVVSCLLLSLVEESEA). Intrachain disulfides connect C33–C94, C43–C68, C51–C84, and C66–C86.

This sequence belongs to the DEFL family. Flower buds.

It is found in the secreted. The polypeptide is Defensin-like protein 232 (SCRL23) (Arabidopsis thaliana (Mouse-ear cress)).